Consider the following 237-residue polypeptide: Peptidase E (237 aa).

Catalysis depends on charge relay system residues Ser122, Asp137, and His159.

Belongs to the peptidase S51 family.

The protein resides in the cytoplasm. It catalyses the reaction Dipeptidase E catalyzes the hydrolysis of dipeptides Asp-|-Xaa. It does not act on peptides with N-terminal Glu, Asn or Gln, nor does it cleave isoaspartyl peptides.. Hydrolyzes dipeptides containing N-terminal aspartate residues. May play a role in allowing the cell to use peptide aspartate to spare carbon otherwise required for the synthesis of the aspartate family of amino acids. This is Peptidase E from Shewanella baltica (strain OS155 / ATCC BAA-1091).